Reading from the N-terminus, the 338-residue chain is UPF0324 membrane protein HI_1643 (338 aa).

10 helical membrane-spanning segments follow: residues 5–23 (PFYF…ANYL), 33–55 (HISA…YPQF), 62–84 (GVLF…RLTF), 94–116 (AVVT…GIRY), 123–145 (LVYL…AEPV), 155–177 (VAIA…FYTW), 222–239 (LRVM…WLLT), 254–273 (IPWF…FDLL), 280–302 (LFVE…TTQA), and 312–334 (PLVL…NYGI).

The protein belongs to the UPF0324 family.

It is found in the cell membrane. The sequence is that of UPF0324 membrane protein HI_1643 from Haemophilus influenzae (strain ATCC 51907 / DSM 11121 / KW20 / Rd).